Reading from the N-terminus, the 175-residue chain is Alpha-crystallin B chain (175 aa).

The residue at position 1 (M1) is an N-acetylmethionine. S19 carries the post-translational modification Phosphoserine. The O-linked (GlcNAc) serine glycan is linked to S41. S45 and S59 each carry phosphoserine. A sHSP domain is found at 56–164 (RAPSWIDTGL…PERTIPITRE (109 aa)). H83 lines the Zn(2+) pocket. N6-acetyllysine is present on K92. Positions 104, 106, 111, and 119 each coordinate Zn(2+). A disordered region spans residues 139-175 (SDGVLTMNGPRKQASGPERTIPITREEKPAVTAAPKK). The residue at position 166 (K166) is an N6-acetyllysine. An O-linked (GlcNAc) threonine glycan is attached at T170.

This sequence belongs to the small heat shock protein (HSP20) family. In terms of assembly, heteromer composed of three CRYAA and one CRYAB subunits. Aggregates with homologous proteins, including the small heat shock protein HSPB1, to form large heteromeric complexes. Inter-subunit bridging via zinc ions enhances stability, which is crucial as there is no protein turn over in the lens. Interacts with HSPBAP1 and TTN/titin. Interacts with TMEM109; in the cellular response to DNA damage. Interacts with DES; binds rapidly during early stages of DES filament assembly and a reduced binding seen in the later stages. Interacts with ATP6V1A and with MTOR, forming a ternary complex.

The protein resides in the cytoplasm. Its subcellular location is the nucleus. It is found in the secreted. It localises to the lysosome. Functionally, may contribute to the transparency and refractive index of the lens. Has chaperone-like activity, preventing aggregation of various proteins under a wide range of stress conditions. In lens epithelial cells, stabilizes the ATP6V1A protein, preventing its degradation by the proteasome. This Ovis aries (Sheep) protein is Alpha-crystallin B chain (CRYAB).